Here is a 254-residue protein sequence, read N- to C-terminus: Triosephosphate isomerase 2 (254 aa).

9–11 (NMK) serves as a coordination point for substrate. His96 serves as the catalytic Electrophile. Catalysis depends on Glu168, which acts as the Proton acceptor. Substrate contacts are provided by Gly174 and Ser212.

Belongs to the triosephosphate isomerase family. In terms of assembly, homodimer.

Its subcellular location is the cytoplasm. It carries out the reaction D-glyceraldehyde 3-phosphate = dihydroxyacetone phosphate. The protein operates within polyol metabolism; glycerol degradation. Functionally, involved in the glycerol metabolism. Catalyzes stereospecifically the conversion of dihydroxyacetone phosphate (DHAP) to D-glyceraldehyde-3-phosphate (G3P). This Listeria innocua serovar 6a (strain ATCC BAA-680 / CLIP 11262) protein is Triosephosphate isomerase 2.